The following is a 284-amino-acid chain: ATP synthase subunit a (284 aa).

6 helical membrane-spanning segments follow: residues 55–75 (AIHVDTLGWSIAMGILFLGLF), 116–136 (IAPLALTIFVWILLMNILKLI), 165–185 (FGMSIGVFLLILFYSFKVKGV), 196–216 (PFNHWIMIPFNLLLEILALII), 234–254 (VVFILIALLPLWIQWTLNVPW), and 255–275 (AIFHILVIPLQAFIFTVLTVV).

Belongs to the ATPase A chain family. As to quaternary structure, F-type ATPases have 2 components, CF(1) - the catalytic core - and CF(0) - the membrane proton channel. CF(1) has five subunits: alpha(3), beta(3), gamma(1), delta(1), epsilon(1). CF(0) has three main subunits: a(1), b(2) and c(9-12). The alpha and beta chains form an alternating ring which encloses part of the gamma chain. CF(1) is attached to CF(0) by a central stalk formed by the gamma and epsilon chains, while a peripheral stalk is formed by the delta and b chains.

The protein resides in the cell inner membrane. Functionally, key component of the proton channel; it plays a direct role in the translocation of protons across the membrane. The polypeptide is ATP synthase subunit a (Marinobacter nauticus (strain ATCC 700491 / DSM 11845 / VT8) (Marinobacter aquaeolei)).